A 2048-amino-acid polypeptide reads, in one-letter code: Myoferlin (2048 aa).

The C2 1 domain maps to 1 to 101; the sequence is MLRVIVESAT…IGDQNRSLPY (101 aa). Residues 1–2012 lie on the Cytoplasmic side of the membrane; it reads MLRVIVESAT…MRFIVWRRFK (2012 aa). A disordered region spans residues 124–176; that stretch reads YTPPSAPHPNDPSGTSVPGMGEEEEEDQGDEDRVDGIVRGPGPKGPSGTVSEA. Acidic residues predominate over residues 144–156; the sequence is GEEEEEDQGDEDR. Serine 170 and serine 174 each carry phosphoserine. C2 domains lie at 183 to 300 and 339 to 475; these read TKGK…RKWL and DSDD…EATT. Residues 186-281 form a necessary for interaction with EHD2 region; it reads KSSRRMLSNK…RADCLMGEFK (96 aa). Positions 390, 396, 444, 446, and 452 each coordinate Ca(2+). Residues lysine 540 and lysine 871 each carry the N6-acetyllysine modification. C2 domains follow at residues 1110–1238 and 1269–1397; these read GANT…LLWH and LPSQ…GKED. Ca(2+)-binding residues include aspartate 1142, aspartate 1148, aspartate 1204, and aspartate 1206. Lysine 1494 is modified (N6-acetyllysine). C2 domains are found at residues 1523–1641 and 1759–1907; these read PAPP…SHCG and GPPG…EKCS. Residues aspartate 1556, aspartate 1562, aspartate 1611, aspartate 1613, aspartate 1878, serine 1881, and aspartate 1884 each contribute to the Ca(2+) site. A compositionally biased stretch (basic and acidic residues) spans 1964–1975; it reads EADERPAGKGRS. The disordered stretch occupies residues 1964–1986; the sequence is EADERPAGKGRSEPNMNPKLDPP. Residues 2013–2033 traverse the membrane as a helical segment; that stretch reads WVIIGLLLLLILLLFVAVLLY. Over 2034–2048 the chain is Extracellular; that stretch reads SLPNYLSMKIVRPNA.

The protein belongs to the ferlin family. In terms of assembly, interacts with EHD1. Interacts with EHD2; the interaction is direct. Interacts with DNM2 and KDR. Interacts with RIPOR2. Ca(2+) is required as a cofactor. Expressed in myoblasts (at protein level). Expressed in endothelial cells.

Its subcellular location is the cell membrane. It is found in the nucleus membrane. The protein resides in the cytoplasmic vesicle membrane. Calcium/phospholipid-binding protein that plays a role in the plasmalemma repair mechanism of endothelial cells that permits rapid resealing of membranes disrupted by mechanical stress. Involved in endocytic recycling. Implicated in VEGF signal transduction by regulating the levels of the receptor KDR. The polypeptide is Myoferlin (Myof) (Mus musculus (Mouse)).